The following is a 59-amino-acid chain: Sec-independent protein translocase protein TatA 1 (59 aa).

A helical membrane pass occupies residues Phe3–Ser23.

The protein belongs to the TatA/E family. As to quaternary structure, forms a complex with TatC.

The protein localises to the cell inner membrane. Its function is as follows. Part of the twin-arginine translocation (Tat) system that transports large folded proteins containing a characteristic twin-arginine motif in their signal peptide across membranes. TatA could form the protein-conducting channel of the Tat system. This Aquifex aeolicus (strain VF5) protein is Sec-independent protein translocase protein TatA 1.